The following is a 147-amino-acid chain: Hemoglobin subunit delta (147 aa).

Positions 3–147 (HLTADETALV…VANALAHKYH (145 aa)) constitute a Globin domain. The residue at position 51 (Ser51) is a Phosphoserine. Heme b is bound by residues His64 and His93.

Belongs to the globin family. In terms of assembly, heterotetramer of two delta chains and two alpha chains. As to expression, red blood cells.

This is Hemoglobin subunit delta (HBD) from Dugong dugon (Dugong).